The primary structure comprises 407 residues: Na(+)-translocating NADH-quinone reductase subunit F (407 aa).

A helical transmembrane segment spans residues 6–26 (IFLAIGMFTAIVLGLVAIILV). Residues 35–127 (GDVTIQINGE…DMQIRVPEEV (93 aa)) form the 2Fe-2S ferredoxin-type domain. [2Fe-2S] cluster contacts are provided by Cys70, Cys76, Cys79, and Cys111. The 140-residue stretch at 130 to 269 (VKKWECTVES…YGPFGEFFAK (140 aa)) folds into the FAD-binding FR-type domain.

This sequence belongs to the NqrF family. As to quaternary structure, composed of six subunits; NqrA, NqrB, NqrC, NqrD, NqrE and NqrF. Requires [2Fe-2S] cluster as cofactor. It depends on FAD as a cofactor.

The protein resides in the cell inner membrane. It catalyses the reaction a ubiquinone + n Na(+)(in) + NADH + H(+) = a ubiquinol + n Na(+)(out) + NAD(+). NQR complex catalyzes the reduction of ubiquinone-1 to ubiquinol by two successive reactions, coupled with the transport of Na(+) ions from the cytoplasm to the periplasm. The first step is catalyzed by NqrF, which accepts electrons from NADH and reduces ubiquinone-1 to ubisemiquinone by a one-electron transfer pathway. This is Na(+)-translocating NADH-quinone reductase subunit F from Pseudomonas aeruginosa (strain UCBPP-PA14).